The sequence spans 329 residues: Ribosomal RNA small subunit methyltransferase C (329 aa).

Belongs to the methyltransferase superfamily. RsmC family. Monomer.

The protein resides in the cytoplasm. It catalyses the reaction guanosine(1207) in 16S rRNA + S-adenosyl-L-methionine = N(2)-methylguanosine(1207) in 16S rRNA + S-adenosyl-L-homocysteine + H(+). Specifically methylates the guanine in position 1207 of 16S rRNA in the 30S particle. The protein is Ribosomal RNA small subunit methyltransferase C of Actinobacillus pleuropneumoniae serotype 7 (strain AP76).